Reading from the N-terminus, the 200-residue chain is Large ribosomal subunit protein uL4 (200 aa).

Positions 38–75 (GRQGSKQQKNRSDVSGGGKRPWRQKGTGRARAGTSRGP) are disordered.

It belongs to the universal ribosomal protein uL4 family. In terms of assembly, part of the 50S ribosomal subunit.

One of the primary rRNA binding proteins, this protein initially binds near the 5'-end of the 23S rRNA. It is important during the early stages of 50S assembly. It makes multiple contacts with different domains of the 23S rRNA in the assembled 50S subunit and ribosome. In terms of biological role, forms part of the polypeptide exit tunnel. In Azotobacter vinelandii (strain DJ / ATCC BAA-1303), this protein is Large ribosomal subunit protein uL4.